The primary structure comprises 317 residues: Acetyl-coenzyme A carboxylase carboxyl transferase subunit alpha (317 aa).

The CoA carboxyltransferase C-terminal domain maps to 39–293 (RLESKAAAAL…GDALAEALTG (255 aa)).

It belongs to the AccA family. Acetyl-CoA carboxylase is a heterohexamer composed of biotin carboxyl carrier protein (AccB), biotin carboxylase (AccC) and two subunits each of ACCase subunit alpha (AccA) and ACCase subunit beta (AccD).

The protein resides in the cytoplasm. It catalyses the reaction N(6)-carboxybiotinyl-L-lysyl-[protein] + acetyl-CoA = N(6)-biotinyl-L-lysyl-[protein] + malonyl-CoA. It functions in the pathway lipid metabolism; malonyl-CoA biosynthesis; malonyl-CoA from acetyl-CoA: step 1/1. Component of the acetyl coenzyme A carboxylase (ACC) complex. First, biotin carboxylase catalyzes the carboxylation of biotin on its carrier protein (BCCP) and then the CO(2) group is transferred by the carboxyltransferase to acetyl-CoA to form malonyl-CoA. The sequence is that of Acetyl-coenzyme A carboxylase carboxyl transferase subunit alpha from Methylobacterium nodulans (strain LMG 21967 / CNCM I-2342 / ORS 2060).